We begin with the raw amino-acid sequence, 432 residues long: MEGLAVRLLRGSRLLRRNFLTCLSSWKIPPHVSKSSQSEALLNITNNGIHFAPLQTFTDEEMMIKSSVKKFAQEQIAPLVSTMDENSKMEKSVIQGLFQQGLMGIEVDPEYGGTGASFLSTVLVIEELAKVDASVAVFCEIQNTLINTLIRKHGTEEQKATYLPQLTTEKVGSFCLSEAGAGSDSFALKTRADKEGDYYVLNGSKMWISSAEHAGLFLVMANVDPTIGYKGITSFLVDRDTPGLHIGKPENKLGLRASSTCPLTFENVKVPEANILGQIGHGYKYAIGSLNEGRIGIAAQMLGLAQGCFDYTIPYIKERIQFGKRLFDFQGLQHQVAHVATQLEAARLLTYNAARLLEAGKPFIKEASMAKYYASEIAGQTTSKCIEWMGGVGYTKDYPVEKYFRDAKIGTIYEGASNIQLNTIAKHIDAEY.

A mitochondrion-targeting transit peptide spans 1 to 33; the sequence is MEGLAVRLLRGSRLLRRNFLTCLSSWKIPPHVS. Lys70 is subject to N6-acetyllysine; alternate. Position 70 is an N6-succinyllysine; alternate (Lys70). FAD-binding positions include 174-183 and 207-209; these read FCLSEAGAGS and WIS. Ser183 provides a ligand contact to substrate. Position 183 is a phosphoserine (Ser183). Residues Tyr229 and Tyr283 each contribute to the substrate site. Residue Lys284 is modified to N6-acetyllysine; alternate. At Lys284 the chain carries N6-succinyllysine; alternate. 291-294 serves as a coordination point for substrate; sequence NEGR. FAD-binding positions include Arg319, Gln330, and 387–391; that span reads EWMGG. Glu414 acts as the Proton acceptor in catalysis. 416 to 418 provides a ligand contact to FAD; it reads ASN. Residue Lys426 is modified to N6-acetyllysine.

The protein belongs to the acyl-CoA dehydrogenase family. In terms of assembly, homotetramer. The cofactor is FAD. Ubiquitously expressed.

It is found in the mitochondrion matrix. It carries out the reaction 2-methylbutanoyl-CoA + oxidized [electron-transfer flavoprotein] + H(+) = (2E)-2-methylbut-2-enoyl-CoA + reduced [electron-transfer flavoprotein]. It catalyses the reaction (2S)-2-methylbutanoyl-CoA + oxidized [electron-transfer flavoprotein] + H(+) = (2E)-2-methylbut-2-enoyl-CoA + reduced [electron-transfer flavoprotein]. The catalysed reaction is (2R)-2-methylbutanoyl-CoA + oxidized [electron-transfer flavoprotein] + H(+) = ethylacryloyl-CoA + reduced [electron-transfer flavoprotein]. The enzyme catalyses butanoyl-CoA + oxidized [electron-transfer flavoprotein] + H(+) = (2E)-butenoyl-CoA + reduced [electron-transfer flavoprotein]. It carries out the reaction 2-methylpropanoyl-CoA + oxidized [electron-transfer flavoprotein] + H(+) = 2-methylpropenoyl-CoA + reduced [electron-transfer flavoprotein]. It catalyses the reaction hexanoyl-CoA + oxidized [electron-transfer flavoprotein] + H(+) = (2E)-hexenoyl-CoA + reduced [electron-transfer flavoprotein]. The catalysed reaction is 2-methylhexanoyl-CoA + oxidized [electron-transfer flavoprotein] + H(+) = 2-methylhexenoyl-CoA + reduced [electron-transfer flavoprotein]. The enzyme catalyses valproyl-CoA + oxidized [electron-transfer flavoprotein] + H(+) = (2E)-2-propylpent-2-enoyl-CoA + reduced [electron-transfer flavoprotein]. Its pathway is lipid metabolism; mitochondrial fatty acid beta-oxidation. It functions in the pathway amino-acid degradation; L-isoleucine degradation. With respect to regulation, competitively inhibited by valproyl-CoA. Its function is as follows. Short and branched chain specific acyl-CoA dehydrogenase that catalyzes the removal of one hydrogen from C-2 and C-3 of the fatty acyl-CoA thioester, resulting in the formation of trans-2-enoyl-CoA. Among the different mitochondrial acyl-CoA dehydrogenases, acts specifically on short and branched chain acyl-CoA derivatives such as (S)-2-methylbutyryl-CoA as well as short straight chain acyl-CoAs such as butyryl-CoA. Plays an important role in the metabolism of L-isoleucine by catalyzing the dehydrogenation of 2-methylbutyryl-CoA, one of the steps of the L-isoleucine catabolic pathway. Can also act on valproyl-CoA, a metabolite of valproic acid, an antiepileptic drug. In Homo sapiens (Human), this protein is Short/branched chain specific acyl-CoA dehydrogenase, mitochondrial.